A 506-amino-acid chain; its full sequence is Lysine--tRNA ligase (506 aa).

Positions 415 and 422 each coordinate Mg(2+).

The protein belongs to the class-II aminoacyl-tRNA synthetase family. In terms of assembly, homodimer. The cofactor is Mg(2+).

It localises to the cytoplasm. It carries out the reaction tRNA(Lys) + L-lysine + ATP = L-lysyl-tRNA(Lys) + AMP + diphosphate. This is Lysine--tRNA ligase from Erwinia tasmaniensis (strain DSM 17950 / CFBP 7177 / CIP 109463 / NCPPB 4357 / Et1/99).